The chain runs to 290 residues: Lysine export transcriptional regulatory protein LysG (290 aa).

An HTH lysR-type domain is found at 1-57 (MNPIQLDTLLSIIDEGSFEGASLALSISPSAVSQRVKALEHHVGRVLVSRTQPAKAT). Residues 18–37 (FEGASLALSISPSAVSQRVK) constitute a DNA-binding region (H-T-H motif).

It belongs to the LysR transcriptional regulatory family.

Positively regulates the expression of the exporter LysE. Induction requires the presence of a coinducer, which is either intracellular L-lysine, L-arginine or L-citrulline. L-histidine also acts as a coinducer of lysE expression, but this amino acid is not exported by LysE. The lysEG system prevents bacteriostasis due to elevated L-lysine or L-arginine concentrations that arise during growth in the presence of peptides or in mutants possessing a deregulated biosynthesis pathway. The chain is Lysine export transcriptional regulatory protein LysG from Corynebacterium glutamicum (strain ATCC 13032 / DSM 20300 / JCM 1318 / BCRC 11384 / CCUG 27702 / LMG 3730 / NBRC 12168 / NCIMB 10025 / NRRL B-2784 / 534).